The primary structure comprises 977 residues: Macrophage colony-stimulating factor 1 receptor (977 aa).

The signal sequence occupies residues M1–G19. Residues A20–P515 are Extracellular-facing. Ig-like C2-type domains are found at residues E24–P104, S107–R197, Q204–S298, A299–R397, and Y398–Q503. Intrachain disulfides connect C42–C84, C127–C177, and C224–C278. N-linked (GlcNAc...) asparagine glycosylation is found at N45 and N73. 7 N-linked (GlcNAc...) asparagine glycosylation sites follow: N302, N335, N389, N410, N449, N478, and N491. An intrachain disulfide couples C417 to C483. The chain crosses the membrane as a helical span at residues V516–Y536. The Cytoplasmic segment spans residues K537–C977. Residues Q540 to K572 are regulatory juxtamembrane domain. Y544 and Y559 each carry phosphotyrosine; by autocatalysis. In terms of domain architecture, Protein kinase spans L580 to R913. Residues L586 to V594 and K614 contribute to the ATP site. Phosphotyrosine; by autocatalysis is present on residues Y697 and Y706. S711 is modified (phosphoserine). Phosphotyrosine; by autocatalysis is present on Y721. D776 (proton acceptor) is an active-site residue. The tract at residues D794–P816 is activation loop. Phosphotyrosine; by autocatalysis is present on residues Y807 and Y921. Residues Y921–A957 are disordered. Gly residues predominate over residues G929–G941. Y974 carries the phosphotyrosine; by autocatalysis modification.

This sequence belongs to the protein kinase superfamily. Tyr protein kinase family. CSF-1/PDGF receptor subfamily. Monomer. Homodimer. Interacts with CSF1 and IL34. Interaction with dimeric CSF1 or IL34 leads to receptor homodimerization. Interacts with INPPL1/SHIP2 and THOC5. Interacts (tyrosine phosphorylated) with PLCG2 (via SH2 domain). Interacts (tyrosine phosphorylated) with PIK3R1 (via SH2 domain). Interacts (tyrosine phosphorylated) with FYN, YES1 and SRC (via SH2 domain). Interacts (tyrosine phosphorylated) with CBL, GRB2 and SLA2. Post-translationally, autophosphorylated in response to CSF1 or IL34 binding. Phosphorylation at Tyr-559 is important for normal down-regulation of signaling by ubiquitination, internalization and degradation. Phosphorylation at Tyr-559 and Tyr-807 is important for interaction with SRC family members, including FYN, YES1 and SRC, and for subsequent activation of these protein kinases. Phosphorylation at Tyr-697 and Tyr-921 is important for interaction with GRB2. Phosphorylation at Tyr-721 is important for interaction with PIK3R1. Phosphorylation at Tyr-721 and Tyr-807 is important for interaction with PLCG2. Phosphorylation at Tyr-974 is important for interaction with CBL. Dephosphorylation by PTPN2 negatively regulates downstream signaling and macrophage differentiation. In terms of processing, ubiquitinated. Becomes rapidly polyubiquitinated after autophosphorylation, leading to its degradation. As to expression, widely expressed.

Its subcellular location is the cell membrane. The catalysed reaction is L-tyrosyl-[protein] + ATP = O-phospho-L-tyrosyl-[protein] + ADP + H(+). Present in an inactive conformation in the absence of bound ligand. CSF1 or IL34 binding leads to dimerization and activation by autophosphorylation on tyrosine residues. Inhibited by imatinib/STI-571 (Gleevec), dasatinib, sunitinib/SU11248, lestaurtinib/CEP-701, midostaurin/PKC-412, Ki20227, linifanib/ABT-869, Axitinib/AG013736, sorafenib/BAY 43-9006 and GW2580. Its function is as follows. Tyrosine-protein kinase that acts as a cell-surface receptor for CSF1 and IL34 and plays an essential role in the regulation of survival, proliferation and differentiation of hematopoietic precursor cells, especially mononuclear phagocytes, such as macrophages and monocytes. Promotes the release of pro-inflammatory chemokines in response to IL34 and CSF1, and thereby plays an important role in innate immunity and in inflammatory processes. Plays an important role in the regulation of osteoclast proliferation and differentiation, the regulation of bone resorption, and is required for normal bone and tooth development. Required for normal male and female fertility, and for normal development of milk ducts and acinar structures in the mammary gland during pregnancy. Promotes reorganization of the actin cytoskeleton, regulates formation of membrane ruffles, cell adhesion and cell migration, and promotes cancer cell invasion. Activates several signaling pathways in response to ligand binding, including the ERK1/2 and the JNK pathway. Phosphorylates PIK3R1, PLCG2, GRB2, SLA2 and CBL. Activation of PLCG2 leads to the production of the cellular signaling molecules diacylglycerol and inositol 1,4,5-trisphosphate, that then lead to the activation of protein kinase C family members, especially PRKCD. Phosphorylation of PIK3R1, the regulatory subunit of phosphatidylinositol 3-kinase, leads to activation of the AKT1 signaling pathway. Activated CSF1R also mediates activation of the MAP kinases MAPK1/ERK2 and/or MAPK3/ERK1, and of the SRC family kinases SRC, FYN and YES1. Activated CSF1R transmits signals both via proteins that directly interact with phosphorylated tyrosine residues in its intracellular domain, or via adapter proteins, such as GRB2. Promotes activation of STAT family members STAT3, STAT5A and/or STAT5B. Promotes tyrosine phosphorylation of SHC1 and INPP5D/SHIP-1. Receptor signaling is down-regulated by protein phosphatases, such as INPP5D/SHIP-1, that dephosphorylate the receptor and its downstream effectors, and by rapid internalization of the activated receptor. In the central nervous system, may play a role in the development of microglia macrophages. The polypeptide is Macrophage colony-stimulating factor 1 receptor (Csf1r) (Mus musculus (Mouse)).